A 501-amino-acid polypeptide reads, in one-letter code: ADP,ATP carrier protein 3 (501 aa).

Helical transmembrane passes span 23–43 (LKLF…FGAL), 59–79 (IISL…TVLY), 90–110 (YIFY…AYII), 146–166 (YALM…LMFW), 183–203 (PVLG…LVFF), 227–247 (IMLQ…MLLF), 293–313 (IALL…PWKA), 326–346 (FNFM…FMVI), 361–381 (LLTP…IIFI), 383–403 (EIGA…VGAI), 446–466 (FGKS…PTAT), and 470–490 (IIIY…WNVI).

This sequence belongs to the ADP/ATP translocase tlc family.

The protein resides in the cell membrane. Its function is as follows. Provides the rickettsial cell with host ATP in exchange for rickettsial ADP. This is an obligate exchange system. This energy acquiring activity is an important component of rickettsial parasitism. The chain is ADP,ATP carrier protein 3 (tlcC) from Rickettsia felis (strain ATCC VR-1525 / URRWXCal2) (Rickettsia azadi).